Here is a 225-residue protein sequence, read N- to C-terminus: Orotate phosphoribosyltransferase (225 aa).

Position 31 (K31) interacts with 5-phospho-alpha-D-ribose 1-diphosphate. 39–40 contacts orotate; it reads FF. 5-phospho-alpha-D-ribose 1-diphosphate is bound by residues 78–79, R105, K106, K109, H111, and 130–138; these read YK and DDVLTSGKA. Orotate-binding residues include T134 and R163.

It belongs to the purine/pyrimidine phosphoribosyltransferase family. PyrE subfamily. Homodimer.

It catalyses the reaction orotidine 5'-phosphate + diphosphate = orotate + 5-phospho-alpha-D-ribose 1-diphosphate. Its pathway is pyrimidine metabolism; UMP biosynthesis via de novo pathway; UMP from orotate: step 1/2. Its function is as follows. Catalyzes the transfer of a ribosyl phosphate group from 5-phosphoribose 1-diphosphate to orotate, leading to the formation of orotidine monophosphate (OMP). The protein is Orotate phosphoribosyltransferase (URA5) of Cryptococcus neoformans var. grubii serotype A (strain H99 / ATCC 208821 / CBS 10515 / FGSC 9487) (Filobasidiella neoformans var. grubii).